A 325-amino-acid polypeptide reads, in one-letter code: Syntaxin-16 (325 aa).

The Cytoplasmic portion of the chain corresponds to 1–301 (MATRRLTDAF…AEQYQKKNRK (301 aa)). Residue S41 is modified to Phosphoserine. One can recognise a t-SNARE coiled-coil homology domain in the interval 230 to 292 (TLMVEERERE…EDGLKQLHKA (63 aa)). A helical; Anchor for type IV membrane protein membrane pass occupies residues 302–322 (MLVILILFVIIIVLIVVLVGV). Residues 323–325 (KSR) lie on the Vesicular side of the membrane.

Belongs to the syntaxin family. As to quaternary structure, interacts with GCC2. Interacts with BAIAP3; this interaction is increased in the presence of calcium. In terms of tissue distribution, ubiquitous.

The protein resides in the golgi apparatus membrane. Its subcellular location is the cytoplasm. Its function is as follows. SNARE involved in vesicular transport from the late endosomes to the trans-Golgi network. This Homo sapiens (Human) protein is Syntaxin-16 (STX16).